We begin with the raw amino-acid sequence, 4423 residues long: Nonribosomal peptide synthetase 7 (4423 aa).

The segment at 572–986 (NIYPCTSIQE…LISQDDKNRI (415 aa)) is condensation 1. The interval 1007–1404 (ERIQKQPSAV…GRRDTQVKIR (398 aa)) is adenylation 1. The Carrier 1 domain maps to 1533-1609 (LPLTETEQKL…DLARTIDERN (77 aa)). Ser1570 is subject to O-(pantetheine 4'-phosphoryl)serine. The interval 1657 to 2066 (EDVYPCTSLQ…QFLDETHHET (410 aa)) is condensation 2. Residues 2102-2499 (RDVAKEQPDS…YIGRMGSEVK (398 aa)) form an adenylation 2 region. One can recognise a Carrier 2 domain in the interval 2642-2718 (VPQTRIGKKL…DCARILEADQ (77 aa)). The residue at position 2679 (Ser2679) is an O-(pantetheine 4'-phosphoryl)serine. The condensation 3 stretch occupies residues 2764 to 3170 (EDVYPCTPMQ…AASASSDDQT (407 aa)). The interval 3205–3609 (RSLETRPDSQ…GRGDSQIKIR (405 aa)) is adenylation 3. In terms of domain architecture, Carrier 3 spans 3731-3804 (TESEYITRTL…KMAVVAQHQT (74 aa)). Residue Ser3765 is modified to O-(pantetheine 4'-phosphoryl)serine. The interval 3875–4278 (TFVLDAEGDL…SQDEKLALLG (404 aa)) is condensation 4. A compositionally biased stretch (polar residues) spans 4288 to 4300 (KLTKLQRVNSPKE). Residues 4288–4312 (KLTKLQRVNSPKEQTLRKDKPTNGV) are disordered.

Belongs to the NRP synthetase family.

It functions in the pathway secondary metabolite biosynthesis. Functionally, nonribosomal peptide synthetase; part of the gene cluster that mediates the biosynthesis of the lipopeptide fusaristatin A. Fusaristatin A consists of a polyketide chain linked to three amino acid residues glutamine (Gln), dehydroalanine (dehydro-Ala), and beta-aminoisobutyric acid. The biosynthesis starts with formation of a linear polyketide chain by the highly reducing polyketide synthase PKS6. The gene cluster does not contain an acyl-CoA ligase or an acyl-transferase, and it is therefore predicted that the polyketide is transferred directly to the nonribosomal peptide synthetase NRPS7. Modules 1-3 from NRPS7 incorporate dehydro-Ala, Gln, and beta-aminoisobutyric acid in the compound, which is released by cyclization. The beta-aminoisobutyric acid units are most likely not freely available to the NRPS, but can be synthesized from thymine, which requires a dehydrogenase, a monooxygenase, and an aminotransferase. The fusaristatin A cluster contains a cytochrome P450 monooxygenase (FGSG_08207) and an aminotransferase (FGSG_17085), which theoretically can perform two of the enzymatic steps. The enzymes may however also be involved in biosynthesis of dehydroalanine or modification of the polyketide. The dehydro-Ala residue can be a result of cyclization, where serine is dehydrated. The last gene of the cluster encodes a protein with an A/B barrel domain found in variable enzymes, which hampers functional prediction. The polypeptide is Nonribosomal peptide synthetase 7 (Gibberella zeae (strain ATCC MYA-4620 / CBS 123657 / FGSC 9075 / NRRL 31084 / PH-1) (Wheat head blight fungus)).